The following is an 82-amino-acid chain: Putative membrane protein insertion efficiency factor (82 aa).

It belongs to the UPF0161 family.

Its subcellular location is the cell inner membrane. Functionally, could be involved in insertion of integral membrane proteins into the membrane. The protein is Putative membrane protein insertion efficiency factor of Rickettsia peacockii (strain Rustic).